The primary structure comprises 234 residues: Adenosine 5'-phosphosulfate reductase (234 aa).

The [4Fe-4S] cluster site is built by Cys120, Cys121, Cys203, and Cys206. Cys229 functions as the Nucleophile; cysteine thiosulfonate intermediate in the catalytic mechanism.

The protein belongs to the PAPS reductase family. CysH subfamily. [4Fe-4S] cluster serves as cofactor.

It is found in the cytoplasm. It carries out the reaction [thioredoxin]-disulfide + sulfite + AMP + 2 H(+) = adenosine 5'-phosphosulfate + [thioredoxin]-dithiol. It functions in the pathway sulfur metabolism; hydrogen sulfide biosynthesis; sulfite from sulfate. Functionally, catalyzes the formation of sulfite from adenosine 5'-phosphosulfate (APS) using thioredoxin as an electron donor. This Bacillus thuringiensis (strain Al Hakam) protein is Adenosine 5'-phosphosulfate reductase.